Consider the following 160-residue polypeptide: Nucleotide-binding protein VFMJ11_1323 (160 aa).

The protein belongs to the YajQ family.

Nucleotide-binding protein. In Aliivibrio fischeri (strain MJ11) (Vibrio fischeri), this protein is Nucleotide-binding protein VFMJ11_1323.